Consider the following 814-residue polypeptide: DNA ligase (814 aa).

Residues 46–50 (DAEYD), 95–96 (SL), and Glu-129 each bind NAD(+). Lys-131 (N6-AMP-lysine intermediate) is an active-site residue. NAD(+) contacts are provided by Arg-152, Glu-189, Lys-305, and Lys-329. Positions 434, 437, 458, and 464 each coordinate Zn(2+). The segment at 525 to 548 (LSAQRRSEGEPAPKKPTKKKGEEE) is disordered. The BRCT domain maps to 735–814 (TSAAAFAGKT…DDWLAMLAEA (80 aa)).

This sequence belongs to the NAD-dependent DNA ligase family. LigA subfamily. It depends on Mg(2+) as a cofactor. The cofactor is Mn(2+).

The enzyme catalyses NAD(+) + (deoxyribonucleotide)n-3'-hydroxyl + 5'-phospho-(deoxyribonucleotide)m = (deoxyribonucleotide)n+m + AMP + beta-nicotinamide D-nucleotide.. In terms of biological role, DNA ligase that catalyzes the formation of phosphodiester linkages between 5'-phosphoryl and 3'-hydroxyl groups in double-stranded DNA using NAD as a coenzyme and as the energy source for the reaction. It is essential for DNA replication and repair of damaged DNA. The protein is DNA ligase of Methylorubrum extorquens (strain PA1) (Methylobacterium extorquens).